We begin with the raw amino-acid sequence, 268 residues long: Ribosomal RNA small subunit methyltransferase A (268 aa).

Residues Asn-12, Leu-14, Gly-38, Glu-59, Asp-82, and Asn-107 each contribute to the S-adenosyl-L-methionine site.

This sequence belongs to the class I-like SAM-binding methyltransferase superfamily. rRNA adenine N(6)-methyltransferase family. RsmA subfamily.

The protein localises to the cytoplasm. The enzyme catalyses adenosine(1518)/adenosine(1519) in 16S rRNA + 4 S-adenosyl-L-methionine = N(6)-dimethyladenosine(1518)/N(6)-dimethyladenosine(1519) in 16S rRNA + 4 S-adenosyl-L-homocysteine + 4 H(+). Specifically dimethylates two adjacent adenosines (A1518 and A1519) in the loop of a conserved hairpin near the 3'-end of 16S rRNA in the 30S particle. May play a critical role in biogenesis of 30S subunits. The protein is Ribosomal RNA small subunit methyltransferase A of Onion yellows phytoplasma (strain OY-M).